Consider the following 392-residue polypeptide: Formate-dependent phosphoribosylglycinamide formyltransferase (392 aa).

N(1)-(5-phospho-beta-D-ribosyl)glycinamide-binding positions include 22–23 (EL) and Glu-82. ATP contacts are provided by residues Arg-114, Lys-155, 160-165 (SSGKGQ), 195-198 (EGVV), and Glu-203. Positions 119–308 (RLAAEELGLP…EFALHVRAFL (190 aa)) constitute an ATP-grasp domain. Glu-267 and Glu-279 together coordinate Mg(2+). N(1)-(5-phospho-beta-D-ribosyl)glycinamide contacts are provided by residues Asp-286, Lys-355, and 362-363 (RR).

It belongs to the PurK/PurT family. In terms of assembly, homodimer.

The enzyme catalyses N(1)-(5-phospho-beta-D-ribosyl)glycinamide + formate + ATP = N(2)-formyl-N(1)-(5-phospho-beta-D-ribosyl)glycinamide + ADP + phosphate + H(+). Its pathway is purine metabolism; IMP biosynthesis via de novo pathway; N(2)-formyl-N(1)-(5-phospho-D-ribosyl)glycinamide from N(1)-(5-phospho-D-ribosyl)glycinamide (formate route): step 1/1. In terms of biological role, involved in the de novo purine biosynthesis. Catalyzes the transfer of formate to 5-phospho-ribosyl-glycinamide (GAR), producing 5-phospho-ribosyl-N-formylglycinamide (FGAR). Formate is provided by PurU via hydrolysis of 10-formyl-tetrahydrofolate. The chain is Formate-dependent phosphoribosylglycinamide formyltransferase from Salmonella schwarzengrund (strain CVM19633).